Here is a 348-residue protein sequence, read N- to C-terminus: Succinylglutamate desuccinylase (348 aa).

Histidine 64, glutamate 67, and histidine 164 together coordinate Zn(2+). The active site involves glutamate 228.

It belongs to the AspA/AstE family. Succinylglutamate desuccinylase subfamily. Zn(2+) is required as a cofactor.

The catalysed reaction is N-succinyl-L-glutamate + H2O = L-glutamate + succinate. It participates in amino-acid degradation; L-arginine degradation via AST pathway; L-glutamate and succinate from L-arginine: step 5/5. In terms of biological role, transforms N(2)-succinylglutamate into succinate and glutamate. In Shewanella amazonensis (strain ATCC BAA-1098 / SB2B), this protein is Succinylglutamate desuccinylase.